We begin with the raw amino-acid sequence, 753 residues long: Transcription factor SOX-30 (753 aa).

2 disordered regions span residues 1-45 (MERA…TLSA) and 137-161 (AKKQ…TGPR). Pro residues predominate over residues 7–23 (EPPPQPRPLRPAPPPLP). A DNA-binding region (HMG box) is located at residues 337 to 405 (VKRPMNAFMV…KHREEFPGWV (69 aa)). Disordered regions lie at residues 514 to 575 (TGPS…SPCP) and 726 to 753 (PTST…LRDL). Composition is skewed to polar residues over residues 531–563 (TVKQ…STIQ) and 726–739 (PTST…VNVT).

Interacts with CTNNB1, competitively inhibiting CTNNB1-TCF7L2/TCF4 interaction.

Its subcellular location is the nucleus. It localises to the cytoplasm. Acts both as a transcriptional activator and a repressor. Binds to the DNA sequence 5'-ACAAT-3' and shows a preference for guanine residues surrounding this core motif. Binds to its own promoter and activates its own transcription. Required to activate the expression of postmeiotic genes involved in spermiogenesis. Binds to the promoter region of CTNNB1 and represses its transcription which leads to inhibition of Wnt signaling. Also inhibits Wnt signaling by binding to the CTNNB1 protein, preventing interaction of CTNNB1 with TCF7L2/TCF4. This chain is Transcription factor SOX-30 (SOX30), found in Homo sapiens (Human).